The chain runs to 379 residues: MVSKPHGGKLVRRLVAERTRERILSEQKEYPSVKIDHGRAIDLENIAHGVYSPLKGFLTSDDFQSVLDHMRLSDDTPWTIPIVIDIVEKTFDEGDAVLLYYEDIPIARMHVEEIYTYDKREFAQKVFKTTDPNHPGVAKVYSLGKYLVGGEIELLNEVPNPFAKYTLRPVETRVLFKERGWRTIVAFQTRNAPHVGHEYVQKAALTFVDGLFINPVLGKKKKGDYKDEVIIKAYETLFEHYYPKNAATLATVRYEMRYAGPREAIHHAIMRKNFGATHFIVGRDHAGVGDYYGPYEAWDMFENFPDLGITPMFIREAFYCRKCGGMVNAKICPHPKEFHVRISGTKLRKMIMAGEQPPEYMMRPEVYEVIRSFEKPFVE.

Belongs to the sulfate adenylyltransferase family.

The enzyme catalyses sulfate + ATP + H(+) = adenosine 5'-phosphosulfate + diphosphate. It functions in the pathway sulfur metabolism; hydrogen sulfide biosynthesis; sulfite from sulfate: step 1/3. The chain is Sulfate adenylyltransferase from Thermococcus onnurineus (strain NA1).